Here is a 377-residue protein sequence, read N- to C-terminus: Ipis-1 (377 aa).

Asparagine 11 and asparagine 226 each carry an N-linked (GlcNAc...) asparagine glycan.

It belongs to the serpin family. As to expression, female salivary gland. Not detected in midgut and other tissues.

The protein resides in the secreted. In terms of biological role, salivary protein with immunosuppressive properties that can modulate blood feeding of ticks on vertebrate species. Inhibits proliferation of bovine peripheral blood mononuclear cells (PBMCs). Inhibits IFN-gamma (IFNG) production by bovine PBMCs. This Ixodes persulcatus (Taiga tick) protein is Ipis-1.